Reading from the N-terminus, the 338-residue chain is Ketol-acid reductoisomerase (NADP(+)) (338 aa).

Residues 1 to 181 (MKVFYDKDAD…GGGRAGIIET (181 aa)) form the KARI N-terminal Rossmann domain. Residues 24–27 (YGSQ), Arg47, and Ser52 contribute to the NADP(+) site. His107 is a catalytic residue. Gly133 serves as a coordination point for NADP(+). In terms of domain architecture, KARI C-terminal knotted spans 182–327 (NFREETETDL…SKLRAMMPWI (146 aa)). Residues Asp190, Glu194, Glu226, and Glu230 each contribute to the Mg(2+) site. Ser251 lines the substrate pocket.

The protein belongs to the ketol-acid reductoisomerase family. Mg(2+) serves as cofactor.

It catalyses the reaction (2R)-2,3-dihydroxy-3-methylbutanoate + NADP(+) = (2S)-2-acetolactate + NADPH + H(+). The enzyme catalyses (2R,3R)-2,3-dihydroxy-3-methylpentanoate + NADP(+) = (S)-2-ethyl-2-hydroxy-3-oxobutanoate + NADPH + H(+). It functions in the pathway amino-acid biosynthesis; L-isoleucine biosynthesis; L-isoleucine from 2-oxobutanoate: step 2/4. The protein operates within amino-acid biosynthesis; L-valine biosynthesis; L-valine from pyruvate: step 2/4. Involved in the biosynthesis of branched-chain amino acids (BCAA). Catalyzes an alkyl-migration followed by a ketol-acid reduction of (S)-2-acetolactate (S2AL) to yield (R)-2,3-dihydroxy-isovalerate. In the isomerase reaction, S2AL is rearranged via a Mg-dependent methyl migration to produce 3-hydroxy-3-methyl-2-ketobutyrate (HMKB). In the reductase reaction, this 2-ketoacid undergoes a metal-dependent reduction by NADPH to yield (R)-2,3-dihydroxy-isovalerate. The chain is Ketol-acid reductoisomerase (NADP(+)) from Paraburkholderia xenovorans (strain LB400).